Consider the following 135-residue polypeptide: MIKLLRSYCLYFAWLVSCIGTLMSVYYSYLLNVEPCVLCYYQRICLFPLVVILGISAYLDDLSVKIYALPLALIGFCIAIYQVCLQEIPGMTLDICGKVSCSTKLFLLGFITMPMASALAFFAIANLLIFATKSE.

The helical transmembrane segment at 7-26 (SYCLYFAWLVSCIGTLMSVY) threads the bilayer. C36 and C39 are disulfide-bonded. A run of 2 helical transmembrane segments spans residues 41 to 60 (YQRI…AYLD) and 67 to 84 (YALP…YQVC). C96 and C101 are oxidised to a cystine. Residues 109–131 (GFITMPMASALAFFAIANLLIFA) form a helical membrane-spanning segment.

The protein belongs to the DsbB family. BdbC subfamily.

The protein resides in the cell inner membrane. Its function is as follows. Required for disulfide bond formation in some proteins. The sequence is that of Probable disulfide formation protein from Chlamydia muridarum (strain MoPn / Nigg).